The sequence spans 584 residues: Beta-(1--&gt;2)glucan export ATP-binding/permease protein NdvA (584 aa).

One can recognise an ABC transmembrane type-1 domain in the interval 21–301 (VSLVVAANII…MRQFSTQIFE (281 aa)). The next 6 membrane-spanning stretches (helical) occupy residues 29–49 (IILAVITIAEPILFGWIIDAI), 57–77 (DILFLWGGFGIFNTIAFVLVA), 136–156 (THLATAVALVLLVPTAFSMDV), 158–178 (LTLVLIVLGLIYVAIGKMVMD), 248–268 (IASTASMLIILIIGTMLVQSG), and 272–292 (VGDVIAFIGFANLLIARLDQM). The ABC transporter domain occupies 335 to 569 (VEFRHVSFDF…GGRFAALLHT (235 aa)). Residue 368 to 375 (GPTGAGKT) coordinates ATP.

The protein belongs to the ABC transporter superfamily. Beta-(1--&gt;2)glucan exporter (TC 3.A.1.108.1) family. As to quaternary structure, homodimer.

Its subcellular location is the cell inner membrane. It carries out the reaction [(1-&gt;2)-beta-D-glucosyl](n)(in) + ATP + H2O = [(1-&gt;2)-beta-D-glucosyl](n)(out) + ADP + phosphate + H(+). Functionally, involved in beta-(1--&gt;2)glucan export. Transmembrane domains (TMD) form a pore in the inner membrane and the ATP-binding domain (NBD) is responsible for energy generation. The polypeptide is Beta-(1--&gt;2)glucan export ATP-binding/permease protein NdvA (Agrobacterium vitis (Rhizobium vitis)).